A 37-amino-acid polypeptide reads, in one-letter code: Cytochrome b6-f complex subunit 5 (37 aa).

A helical transmembrane segment spans residues 5–25 (SLFGIVLGLIPITLAGLFVTA).

The protein belongs to the PetG family. As to quaternary structure, the 4 large subunits of the cytochrome b6-f complex are cytochrome b6, subunit IV (17 kDa polypeptide, PetD), cytochrome f and the Rieske protein, while the 4 small subunits are PetG, PetL, PetM and PetN. The complex functions as a dimer.

It is found in the plastid. It localises to the chloroplast thylakoid membrane. Its function is as follows. Component of the cytochrome b6-f complex, which mediates electron transfer between photosystem II (PSII) and photosystem I (PSI), cyclic electron flow around PSI, and state transitions. PetG is required for either the stability or assembly of the cytochrome b6-f complex. In Arabis hirsuta (Hairy rock-cress), this protein is Cytochrome b6-f complex subunit 5.